Consider the following 503-residue polypeptide: Cardiolipin synthase (503 aa).

3 helical membrane-spanning segments follow: residues 5–25 (LNVL…RGFL), 30–50 (VGTL…IIFF), and 59–79 (LTWL…YLMF). 2 PLD phosphodiesterase domains span residues 238–265 (INYR…GDEY) and 416–443 (NRGF…DMRS). Residues H243, K245, D250, H421, K423, and D428 contribute to the active site.

This sequence belongs to the phospholipase D family. Cardiolipin synthase subfamily.

It localises to the cell membrane. It catalyses the reaction 2 a 1,2-diacyl-sn-glycero-3-phospho-(1'-sn-glycerol) = a cardiolipin + glycerol. In terms of biological role, catalyzes the reversible phosphatidyl group transfer from one phosphatidylglycerol molecule to another to form cardiolipin (CL) (diphosphatidylglycerol) and glycerol. In Alkalihalophilus pseudofirmus (strain ATCC BAA-2126 / JCM 17055 / OF4) (Bacillus pseudofirmus), this protein is Cardiolipin synthase (cls).